We begin with the raw amino-acid sequence, 327 residues long: Quinone oxidoreductase 1 (327 aa).

NADP(+) contacts are provided by residues 42–46 (FIDTY), Tyr130, 152–153 (GV), 173–177 (GTAQK), Tyr192, Ser216, 238–241 (FGNS), 264–266 (PSL), and Arg317.

It belongs to the zinc-containing alcohol dehydrogenase family. Quinone oxidoreductase subfamily. Homodimer.

The enzyme catalyses 2 a quinone + NADPH + H(+) = 2 a 1,4-benzosemiquinone + NADP(+). The chain is Quinone oxidoreductase 1 (qorA) from Escherichia coli (strain K12).